A 178-amino-acid polypeptide reads, in one-letter code: Adenine phosphoribosyltransferase (178 aa).

The protein belongs to the purine/pyrimidine phosphoribosyltransferase family. In terms of assembly, homodimer.

The protein localises to the cytoplasm. The catalysed reaction is AMP + diphosphate = 5-phospho-alpha-D-ribose 1-diphosphate + adenine. It participates in purine metabolism; AMP biosynthesis via salvage pathway; AMP from adenine: step 1/1. In terms of biological role, catalyzes a salvage reaction resulting in the formation of AMP, that is energically less costly than de novo synthesis. In Erythrobacter litoralis (strain HTCC2594), this protein is Adenine phosphoribosyltransferase.